We begin with the raw amino-acid sequence, 745 residues long: Cysteine protease atg4 (745 aa).

Low complexity-rich tracts occupy residues 29 to 42, 52 to 64, and 194 to 215; these read QQSYLRQQQQAPQQ, SPTSSSSTPSSST, and NNNSNSNNNNNHNNNHNNNNNN. Disordered stretches follow at residues 29–68 and 192–215; these read QQSYLRQQQQAPQQISYGFNQPNSPTSSSSTPSSSTAMGN and FQNNNSNSNNNNNHNNNHNNNNNN. Cys262 functions as the Nucleophile in the catalytic mechanism. Disordered stretches follow at residues 344 to 363 and 439 to 480; these read LNRGGGGSSKGKKKKEKEEE and QNNN…NGYN. The segment covering 439-477 has biased composition (low complexity); the sequence is QNNNKNNNNNNPTTTTTTTTTATSSNNNNNQSPPSRVPN. Catalysis depends on residues Asp562 and His564. Residues 686–745 form a disordered region; sequence HIPYNPNNNQNNNQNNNNNNNKNNNNNTNQQQTPNYPPKLNTYQPDFSSDGEIDDFTMVG. The span at 688 to 719 shows a compositional bias: low complexity; it reads PYNPNNNQNNNQNNNNNNNKNNNNNTNQQQTP. Over residues 734–745 the composition is skewed to acidic residues; the sequence is SDGEIDDFTMVG.

It belongs to the peptidase C54 family.

The protein resides in the cytoplasm. It carries out the reaction [protein]-C-terminal L-amino acid-glycyl-phosphatidylethanolamide + H2O = [protein]-C-terminal L-amino acid-glycine + a 1,2-diacyl-sn-glycero-3-phosphoethanolamine. Its function is as follows. Cysteine protease that plays a key role in autophagy by mediating both proteolytic activation and delipidation of ATG8 family proteins. The protease activity is required for proteolytic activation of ATG8 family proteins: cleaves the C-terminal amino acid of ATG8 proteins to reveal a C-terminal glycine. Exposure of the glycine at the C-terminus is essential for ATG8 proteins conjugation to phosphatidylethanolamine (PE) and insertion to membranes, which is necessary for autophagy. In addition to the protease activity, also mediates delipidation of PE-conjugated ATG8 proteins. The polypeptide is Cysteine protease atg4 (atg4-1) (Dictyostelium discoideum (Social amoeba)).